A 70-amino-acid polypeptide reads, in one-letter code: MTFKVYYQADKTKRPVRENTQSLYIEADSEAEALLMVEHNTDYNIEFVEQLDEKALAYEKQNPNFKLTTF.

The protein belongs to the RNA polymerase subunit epsilon family. As to quaternary structure, RNAP is composed of a core of 2 alpha, a beta and a beta' subunit. The core is associated with a delta subunit, and at least one of epsilon or omega. When a sigma factor is associated with the core the holoenzyme is formed, which can initiate transcription.

It carries out the reaction RNA(n) + a ribonucleoside 5'-triphosphate = RNA(n+1) + diphosphate. Its function is as follows. A non-essential component of RNA polymerase (RNAP). The polypeptide is DNA-directed RNA polymerase subunit epsilon (Limosilactobacillus reuteri (strain DSM 20016) (Lactobacillus reuteri)).